A 529-amino-acid polypeptide reads, in one-letter code: Sodium/hydrogen exchanger 4 (529 aa).

At 1–19 (MSIGLTEFVTNKLAAEHPQ) the chain is on the cytoplasmic side. The chain crosses the membrane as a helical span at residues 20–40 (VIPISVFIAILCLCLVIGHLL). At 41-45 (EENRW) the chain is on the vacuolar side. The helical transmembrane segment at 46-66 (VNESITAILVGAASGTVILLI) threads the bilayer. The Cytoplasmic portion of the chain corresponds to 67-73 (SKGKSSH). An intramembrane region (helical) is located at residues 74–94 (ILVFDEELFFIYLLPPIIFNA). The Cytoplasmic segment spans residues 95–112 (GFQVKKKKFFHNFLTIMS). The chain crosses the membrane as a helical span at residues 113 to 133 (FGVIGVFISTVIISFGTWWLF). Over 134–171 (PKLGFKGLSARDYLAIGTIFSSTDTVCTLQILHQDETP) the chain is Vacuolar. A helical transmembrane segment spans residues 172 to 192 (LLYSLVFGEGVVNDATSVVLF). Residues 193-214 (NAVQKIQFESLTGWTALQVFGN) lie on the Cytoplasmic side of the membrane. The chain crosses the membrane as a helical span at residues 215–235 (FLYLFSTSTLLGIGVGLITSF). Over 236–250 (VLKTLYFGRHSTTRE) the chain is Vacuolar. A helical membrane pass occupies residues 251–267 (LAIMVLMAYLSYMLAEL). Residues 268–273 (FSLSGI) are Cytoplasmic-facing. A helical transmembrane segment spans residues 274–291 (LTVFFCGVLMSHYASYNV). Topologically, residues 292–301 (TESSRITSRH) are vacuolar. A helical transmembrane segment spans residues 302–322 (VFAMLSFIAETFIFLYVGTDA). The Cytoplasmic portion of the chain corresponds to 323 to 342 (LDFTKWKTSSLSFGGTLGVS). A helical transmembrane segment spans residues 343 to 363 (GVITALVLLGRAAFVFPLSVL). The Vacuolar segment spans residues 364–380 (TNFMNRHTERNESITFK). A glycan (N-linked (GlcNAc...) asparagine) is linked at N374. Residues 381–401 (HQVIIWWAGLMRGAVSIALAF) traverse the membrane as a helical segment. Residues 402–415 (KQFTYSGVTLDPVN) are Cytoplasmic-facing. Residues 416–436 (AAMVTNTTIVVLFTTLVFGFL) traverse the membrane as a helical segment. Residues 437–529 (TKPLVNYLLP…GPRRENQPEC (93 aa)) lie on the Vacuolar side of the membrane.

It belongs to the monovalent cation:proton antiporter 1 (CPA1) transporter (TC 2.A.36) family. In terms of tissue distribution, expressed at very low levels in roots and shoots.

It is found in the vacuole membrane. It catalyses the reaction Na(+)(in) + H(+)(out) = Na(+)(out) + H(+)(in). The enzyme catalyses K(+)(in) + H(+)(out) = K(+)(out) + H(+)(in). In terms of biological role, may act in low affinity electroneutral exchange of protons for cations such as Na(+) or K(+) across membranes. May also exchange Li(+) and Cs(+) with a lower affinity. The protein is Sodium/hydrogen exchanger 4 (NHX4) of Arabidopsis thaliana (Mouse-ear cress).